Here is a 294-residue protein sequence, read N- to C-terminus: NAD kinase (294 aa).

D73 (proton acceptor) is an active-site residue. Residues 73 to 74 (DG), 147 to 148 (ND), R175, D177, and 188 to 193 (TAYALS) each bind NAD(+).

The protein belongs to the NAD kinase family. A divalent metal cation is required as a cofactor.

It is found in the cytoplasm. The enzyme catalyses NAD(+) + ATP = ADP + NADP(+) + H(+). Involved in the regulation of the intracellular balance of NAD and NADP, and is a key enzyme in the biosynthesis of NADP. Catalyzes specifically the phosphorylation on 2'-hydroxyl of the adenosine moiety of NAD to yield NADP. This is NAD kinase from Nitrosospira multiformis (strain ATCC 25196 / NCIMB 11849 / C 71).